Reading from the N-terminus, the 213-residue chain is Thiamine-phosphate synthase (213 aa).

4-amino-2-methyl-5-(diphosphooxymethyl)pyrimidine is bound by residues 40 to 44 and Asn-72; that span reads QYRDK. Residues Asp-73 and Asp-91 each contribute to the Mg(2+) site. Thr-110 serves as a coordination point for 4-amino-2-methyl-5-(diphosphooxymethyl)pyrimidine. 137 to 139 serves as a coordination point for 2-[(2R,5Z)-2-carboxy-4-methylthiazol-5(2H)-ylidene]ethyl phosphate; the sequence is SHT. 4-amino-2-methyl-5-(diphosphooxymethyl)pyrimidine is bound at residue Lys-140. Gly-167 provides a ligand contact to 2-[(2R,5Z)-2-carboxy-4-methylthiazol-5(2H)-ylidene]ethyl phosphate.

The protein belongs to the thiamine-phosphate synthase family. The cofactor is Mg(2+).

It catalyses the reaction 2-[(2R,5Z)-2-carboxy-4-methylthiazol-5(2H)-ylidene]ethyl phosphate + 4-amino-2-methyl-5-(diphosphooxymethyl)pyrimidine + 2 H(+) = thiamine phosphate + CO2 + diphosphate. It carries out the reaction 2-(2-carboxy-4-methylthiazol-5-yl)ethyl phosphate + 4-amino-2-methyl-5-(diphosphooxymethyl)pyrimidine + 2 H(+) = thiamine phosphate + CO2 + diphosphate. The enzyme catalyses 4-methyl-5-(2-phosphooxyethyl)-thiazole + 4-amino-2-methyl-5-(diphosphooxymethyl)pyrimidine + H(+) = thiamine phosphate + diphosphate. It participates in cofactor biosynthesis; thiamine diphosphate biosynthesis; thiamine phosphate from 4-amino-2-methyl-5-diphosphomethylpyrimidine and 4-methyl-5-(2-phosphoethyl)-thiazole: step 1/1. In terms of biological role, condenses 4-methyl-5-(beta-hydroxyethyl)thiazole monophosphate (THZ-P) and 2-methyl-4-amino-5-hydroxymethyl pyrimidine pyrophosphate (HMP-PP) to form thiamine monophosphate (TMP). The chain is Thiamine-phosphate synthase from Stutzerimonas stutzeri (strain A1501) (Pseudomonas stutzeri).